Here is a 134-residue protein sequence, read N- to C-terminus: Retinol-binding protein 2 (134 aa).

All-trans-retinol is bound by residues K41 and Q109.

The protein belongs to the calycin superfamily. Fatty-acid binding protein (FABP) family.

The protein resides in the cytoplasm. In terms of biological role, intracellular transport of retinol. This is Retinol-binding protein 2 (Rbp2) from Rattus norvegicus (Rat).